A 311-amino-acid chain; its full sequence is 4-hydroxy-3-methylbut-2-enyl diphosphate reductase (311 aa).

Position 12 (cysteine 12) interacts with [4Fe-4S] cluster. (2E)-4-hydroxy-3-methylbut-2-enyl diphosphate is bound by residues histidine 41 and histidine 74. Dimethylallyl diphosphate-binding residues include histidine 41 and histidine 74. The isopentenyl diphosphate site is built by histidine 41 and histidine 74. Residue cysteine 96 coordinates [4Fe-4S] cluster. Histidine 124 contacts (2E)-4-hydroxy-3-methylbut-2-enyl diphosphate. Dimethylallyl diphosphate is bound at residue histidine 124. Histidine 124 contributes to the isopentenyl diphosphate binding site. The Proton donor role is filled by glutamate 126. A (2E)-4-hydroxy-3-methylbut-2-enyl diphosphate-binding site is contributed by threonine 168. A [4Fe-4S] cluster-binding site is contributed by cysteine 198. Residues serine 226, serine 227, asparagine 228, and serine 270 each contribute to the (2E)-4-hydroxy-3-methylbut-2-enyl diphosphate site. Residues serine 226, serine 227, asparagine 228, and serine 270 each coordinate dimethylallyl diphosphate. Residues serine 226, serine 227, asparagine 228, and serine 270 each coordinate isopentenyl diphosphate.

Belongs to the IspH family. The cofactor is [4Fe-4S] cluster.

The catalysed reaction is isopentenyl diphosphate + 2 oxidized [2Fe-2S]-[ferredoxin] + H2O = (2E)-4-hydroxy-3-methylbut-2-enyl diphosphate + 2 reduced [2Fe-2S]-[ferredoxin] + 2 H(+). It carries out the reaction dimethylallyl diphosphate + 2 oxidized [2Fe-2S]-[ferredoxin] + H2O = (2E)-4-hydroxy-3-methylbut-2-enyl diphosphate + 2 reduced [2Fe-2S]-[ferredoxin] + 2 H(+). It participates in isoprenoid biosynthesis; dimethylallyl diphosphate biosynthesis; dimethylallyl diphosphate from (2E)-4-hydroxy-3-methylbutenyl diphosphate: step 1/1. Its pathway is isoprenoid biosynthesis; isopentenyl diphosphate biosynthesis via DXP pathway; isopentenyl diphosphate from 1-deoxy-D-xylulose 5-phosphate: step 6/6. In terms of biological role, catalyzes the conversion of 1-hydroxy-2-methyl-2-(E)-butenyl 4-diphosphate (HMBPP) into a mixture of isopentenyl diphosphate (IPP) and dimethylallyl diphosphate (DMAPP). Acts in the terminal step of the DOXP/MEP pathway for isoprenoid precursor biosynthesis. The polypeptide is 4-hydroxy-3-methylbut-2-enyl diphosphate reductase (Saccharophagus degradans (strain 2-40 / ATCC 43961 / DSM 17024)).